The sequence spans 282 residues: Nucleotide-binding protein ABO_0549 (282 aa).

Residue 8 to 15 (GRSGSGKT) participates in ATP binding. 59–62 (DARN) serves as a coordination point for GTP.

It belongs to the RapZ-like family.

Its function is as follows. Displays ATPase and GTPase activities. In Alcanivorax borkumensis (strain ATCC 700651 / DSM 11573 / NCIMB 13689 / SK2), this protein is Nucleotide-binding protein ABO_0549.